Here is a 93-residue protein sequence, read N- to C-terminus: UPF0728 protein C10orf53 homolog (93 aa).

The protein belongs to the UPF0728 family.

This is UPF0728 protein C10orf53 homolog from Mus musculus (Mouse).